Reading from the N-terminus, the 519-residue chain is Ribonuclease Y (519 aa).

The helical transmembrane segment at 3–23 (PMTVLISILLTLLGLVVGYYV) threads the bilayer. A KH domain is found at 209-272 (TVSVVNLPND…ETARIALDKL (64 aa)). Positions 335–428 (VLKHSMEVAF…VAAADALSAA (94 aa)) constitute an HD domain.

It belongs to the RNase Y family.

It localises to the cell membrane. Its function is as follows. Endoribonuclease that initiates mRNA decay. This Bacillus velezensis (strain DSM 23117 / BGSC 10A6 / LMG 26770 / FZB42) (Bacillus amyloliquefaciens subsp. plantarum) protein is Ribonuclease Y.